Here is a 118-residue protein sequence, read N- to C-terminus: Transmembrane protein 243 (118 aa).

Residue M1 is modified to N-acetylmethionine. A run of 3 helical transmembrane segments spans residues 32–52 (LVVG…AFVF), 62–82 (IFFA…IYWY), and 94–114 (LIYY…LYFH).

Belongs to the TMEM243 family. As to expression, widely expressed.

The protein resides in the membrane. The chain is Transmembrane protein 243 (TMEM243) from Homo sapiens (Human).